We begin with the raw amino-acid sequence, 157 residues long: 2-C-methyl-D-erythritol 2,4-cyclodiphosphate synthase (157 aa).

A divalent metal cation is bound by residues D8 and H10. Residues 8–10 (DVH) and 34–35 (HS) contribute to the 4-CDP-2-C-methyl-D-erythritol 2-phosphate site. H42 contributes to the a divalent metal cation binding site. Residues 56–58 (DIG), 61–65 (FPDTD), 100–106 (AQAPKMA), 132–135 (TTTE), F139, and R142 contribute to the 4-CDP-2-C-methyl-D-erythritol 2-phosphate site.

Belongs to the IspF family. In terms of assembly, homotrimer. A divalent metal cation serves as cofactor.

The catalysed reaction is 4-CDP-2-C-methyl-D-erythritol 2-phosphate = 2-C-methyl-D-erythritol 2,4-cyclic diphosphate + CMP. It participates in isoprenoid biosynthesis; isopentenyl diphosphate biosynthesis via DXP pathway; isopentenyl diphosphate from 1-deoxy-D-xylulose 5-phosphate: step 4/6. In terms of biological role, involved in the biosynthesis of isopentenyl diphosphate (IPP) and dimethylallyl diphosphate (DMAPP), two major building blocks of isoprenoid compounds. Catalyzes the conversion of 4-diphosphocytidyl-2-C-methyl-D-erythritol 2-phosphate (CDP-ME2P) to 2-C-methyl-D-erythritol 2,4-cyclodiphosphate (ME-CPP) with a corresponding release of cytidine 5-monophosphate (CMP). The sequence is that of 2-C-methyl-D-erythritol 2,4-cyclodiphosphate synthase from Pseudomonas putida (strain ATCC 700007 / DSM 6899 / JCM 31910 / BCRC 17059 / LMG 24140 / F1).